The following is a 372-amino-acid chain: Flap endonuclease 1 (372 aa).

Positions 1 to 105 (MGVKGLNQLI…GELEKRLLRR (105 aa)) are N-domain. Position 34 (aspartate 34) interacts with Mg(2+). 2 residues coordinate DNA: arginine 47 and arginine 71. Residues aspartate 87, glutamate 159, glutamate 161, aspartate 180, and aspartate 182 each contribute to the Mg(2+) site. The segment at 123–254 (EVLKFEKRLV…ATAFKLIKEH (132 aa)) is I-domain. Glutamate 159 contacts DNA. Residues glycine 232 and aspartate 234 each coordinate DNA. Aspartate 234 is a Mg(2+) binding site. Residues 339 to 347 (VQGRLDGFF) are interaction with PCNA. Residues 353–366 (DDKKRKADPKESKA) are compositionally biased toward basic and acidic residues. The segment at 353–372 (DDKKRKADPKESKASKKKKK) is disordered.

This sequence belongs to the XPG/RAD2 endonuclease family. FEN1 subfamily. Interacts with PCNA. Three molecules of RAD27 bind to one PCNA trimer with each molecule binding to one PCNA monomer. PCNA stimulates the nuclease activity without altering cleavage specificity. Requires Mg(2+) as cofactor. Phosphorylated. Phosphorylation upon DNA damage induces relocalization to the nuclear plasma.

It localises to the nucleus. The protein resides in the nucleolus. It is found in the nucleoplasm. The protein localises to the mitochondrion. Its function is as follows. Structure-specific nuclease with 5'-flap endonuclease and 5'-3' exonuclease activities involved in DNA replication and repair. During DNA replication, cleaves the 5'-overhanging flap structure that is generated by displacement synthesis when DNA polymerase encounters the 5'-end of a downstream Okazaki fragment. It enters the flap from the 5'-end and then tracks to cleave the flap base, leaving a nick for ligation. Also involved in the long patch base excision repair (LP-BER) pathway, by cleaving within the apurinic/apyrimidinic (AP) site-terminated flap. Acts as a genome stabilization factor that prevents flaps from equilibrating into structures that lead to duplications and deletions. Also possesses 5'-3' exonuclease activity on nicked or gapped double-stranded DNA, and exhibits RNase H activity. Also involved in replication and repair of rDNA and in repairing mitochondrial DNA. The sequence is that of Flap endonuclease 1 from Candida albicans (strain WO-1) (Yeast).